Reading from the N-terminus, the 402-residue chain is Argininosuccinate synthase (402 aa).

ATP is bound by residues 9–17 and Ala-36; that span reads AYSGGLDTS. L-citrulline-binding residues include Tyr-87 and Ser-92. Gly-117 is an ATP binding site. L-aspartate-binding residues include Thr-119, Asn-123, and Asp-124. Residue Asn-123 participates in L-citrulline binding. L-citrulline is bound by residues Arg-127, Ser-176, Ser-185, Glu-261, and Tyr-273.

The protein belongs to the argininosuccinate synthase family. Type 1 subfamily. In terms of assembly, homotetramer.

It is found in the cytoplasm. It catalyses the reaction L-citrulline + L-aspartate + ATP = 2-(N(omega)-L-arginino)succinate + AMP + diphosphate + H(+). It functions in the pathway amino-acid biosynthesis; L-arginine biosynthesis; L-arginine from L-ornithine and carbamoyl phosphate: step 2/3. This chain is Argininosuccinate synthase, found in Deinococcus radiodurans (strain ATCC 13939 / DSM 20539 / JCM 16871 / CCUG 27074 / LMG 4051 / NBRC 15346 / NCIMB 9279 / VKM B-1422 / R1).